A 310-amino-acid polypeptide reads, in one-letter code: tRNA pseudouridine synthase B (310 aa).

Asp-38 (nucleophile) is an active-site residue.

This sequence belongs to the pseudouridine synthase TruB family. Type 1 subfamily.

The catalysed reaction is uridine(55) in tRNA = pseudouridine(55) in tRNA. In terms of biological role, responsible for synthesis of pseudouridine from uracil-55 in the psi GC loop of transfer RNAs. In Geotalea uraniireducens (strain Rf4) (Geobacter uraniireducens), this protein is tRNA pseudouridine synthase B.